We begin with the raw amino-acid sequence, 627 residues long: Protein fem-1 homolog B (627 aa).

ANK repeat units follow at residues 45–74 (QRST…VQTQ), 87–116 (DGAT…NVNH), 120–149 (TNST…NISI), and 153–182 (YDNT…DPNA). Zn(2+)-binding residues include His185, Cys186, and His218. ANK repeat units lie at residues 186–215 (CGAT…AIVV) and 218–248 (HGMT…DRRS). The TPR repeat unit spans residues 344 to 377 (SHPIIYRGAVYADNMEFEQCIKLWLHALHLRQKG). ANK repeat units lie at residues 483 to 527 (EGFS…EVNA) and 531 to 568 (EGNS…HTDM).

This sequence belongs to the fem-1 family. As to quaternary structure, component of a CRL2 E3 ubiquitin-protein ligase complex, also named ECS (Elongin BC-CUL2/5-SOCS-box protein) complex, composed of CUL2, Elongin BC (ELOB and ELOC), RBX1 and substrate-specific adapter FEM1B. Homooligomer. Interacts with PPM1F and PHTF1. Interacts with the death domain of FAS/TNFRSF6 and TNFRSF1A. Interacts with CHEK1. Interacts with NKX3-1. In terms of tissue distribution, expressed in pancreatic islets, within both beta cells and non-beta cells (at protein level). Highly expressed in adult testis; expressed in all types of spermatogonia. Also expressed in the prostate of neonatal mice.

Its subcellular location is the cytoplasm. The protein localises to the nucleus. It functions in the pathway protein modification; protein ubiquitination. Its activity is regulated as follows. Activity of the CRL2(FEM1B) complex toward FNIP1 is inhibited by BEX family proteins (BEX1, BEX2, BEX3 and/or BEX4) in absence of reductive stress. Mechanistically, BEX proteins act as pseudosubstrate inhibitors that associate with FEM1B via zinc in absence of reductive stress, thereby preventing association between FEM1B and FNIP1. Substrate-recognition component of a Cul2-RING (CRL2) E3 ubiquitin-protein ligase complex of the DesCEND (destruction via C-end degrons) pathway, which recognizes a C-degron located at the extreme C terminus of target proteins, leading to their ubiquitination and degradation. The C-degron recognized by the DesCEND pathway is usually a motif of less than ten residues and can be present in full-length proteins, truncated proteins or proteolytically cleaved forms. The CRL2(FEM1B) complex specifically recognizes proteins ending with -Gly-Leu-Asp-Arg, such as CDK5R1, leading to their ubiquitination and degradation. Also acts as a regulator of the reductive stress response by mediating ubiquitination of reduced FNIP1: in response to reductive stress, the CRL2(FEM1B) complex specifically recognizes a conserved Cys degron in FNIP1 when this degron is reduced, leading to FNIP1 degradation and subsequent activation of mitochondria to recalibrate reactive oxygen species (ROS). Mechanistically, recognizes and binds reduced FNIP1 through two interface zinc ions, which act as a molecular glue that recruit reduced FNIP1 to FEM1B. Promotes ubiquitination of GLI1, suppressing GLI1 transcriptional activator activity. Promotes ubiquitination and degradation of ANKRD37. Promotes ubiquitination and degradation of SLBP. Involved in apoptosis by acting as a death receptor-associated protein that mediates apoptosis. Also involved in glucose homeostasis in pancreatic islet. May also act as an adapter/mediator in replication stress-induced signaling that leads to the activation of CHEK1. The protein is Protein fem-1 homolog B of Mus musculus (Mouse).